Consider the following 419-residue polypeptide: Methylthioribose kinase (419 aa).

2 residues coordinate ATP: N49 and K64. D239 provides a ligand contact to substrate. 256–258 is a binding site for ATP; sequence DPE. Substrate is bound at residue R365.

It belongs to the methylthioribose kinase family. In terms of assembly, homodimer.

The catalysed reaction is 5-(methylsulfanyl)-D-ribose + ATP = 5-(methylsulfanyl)-alpha-D-ribose 1-phosphate + ADP + H(+). It carries out the reaction 5-deoxy-D-ribose + ATP = 5-deoxy-alpha-D-ribose 1-phosphate + ADP + H(+). Its pathway is amino-acid biosynthesis; L-methionine biosynthesis via salvage pathway; S-methyl-5-thio-alpha-D-ribose 1-phosphate from S-methyl-5'-thioadenosine (hydrolase route): step 2/2. Its function is as follows. Catalyzes the phosphorylation of methylthioribose into methylthioribose-1-phosphate. Also catalyzes the phosphorylation of 5-deoxyribose to 5-deoxyribose-1-phosphate. Part of a bifunctional DHAP-shunt salvage pathway for SAM by-products. In Escherichia coli O45:K1 (strain S88 / ExPEC), this protein is Methylthioribose kinase.